The following is a 1385-amino-acid chain: DNA-directed RNA polymerase subunit beta (1385 aa).

This sequence belongs to the RNA polymerase beta chain family. The RNAP catalytic core consists of 2 alpha, 1 beta, 1 beta' and 1 omega subunit. When a sigma factor is associated with the core the holoenzyme is formed, which can initiate transcription.

The enzyme catalyses RNA(n) + a ribonucleoside 5'-triphosphate = RNA(n+1) + diphosphate. DNA-dependent RNA polymerase catalyzes the transcription of DNA into RNA using the four ribonucleoside triphosphates as substrates. The protein is DNA-directed RNA polymerase subunit beta of Sulfurovum sp. (strain NBC37-1).